Reading from the N-terminus, the 355-residue chain is tRNA-specific 2-thiouridylase MnmA (355 aa).

ATP is bound by residues 8 to 15 and Met-34; that span reads GMSGGVDS. Cys-103 serves as the catalytic Nucleophile. Cys-103 and Cys-199 are disulfide-bonded. Gly-127 is an ATP binding site. The interval 149–151 is interaction with tRNA; that stretch reads KDQ. The Cysteine persulfide intermediate role is filled by Cys-199. Residues 305–306 are interaction with tRNA; sequence RY.

This sequence belongs to the MnmA/TRMU family.

It is found in the cytoplasm. The catalysed reaction is S-sulfanyl-L-cysteinyl-[protein] + uridine(34) in tRNA + AH2 + ATP = 2-thiouridine(34) in tRNA + L-cysteinyl-[protein] + A + AMP + diphosphate + H(+). Catalyzes the 2-thiolation of uridine at the wobble position (U34) of tRNA, leading to the formation of s(2)U34. In Clostridium acetobutylicum (strain ATCC 824 / DSM 792 / JCM 1419 / IAM 19013 / LMG 5710 / NBRC 13948 / NRRL B-527 / VKM B-1787 / 2291 / W), this protein is tRNA-specific 2-thiouridylase MnmA.